The primary structure comprises 581 residues: Adenine deaminase (581 aa).

The protein belongs to the metallo-dependent hydrolases superfamily. Adenine deaminase family. Mn(2+) is required as a cofactor.

The enzyme catalyses adenine + H2O + H(+) = hypoxanthine + NH4(+). The polypeptide is Adenine deaminase (Brucella suis biovar 1 (strain 1330)).